Reading from the N-terminus, the 249-residue chain is Anti-H(O) lectin 2 (249 aa).

N-linked (GlcNAc...) asparagine glycosylation is present at Asn118. Residues Glu130 and Asp132 each contribute to the Mn(2+) site. 4 residues coordinate Ca(2+): Asp132, Tyr134, Asn140, and Asp145. Mn(2+) contacts are provided by Asp145 and His148. N-linked (GlcNAc...) asparagine glycosylation occurs at Asn245.

The protein belongs to the leguminous lectin family.

Functionally, di-N-acetylchitobiose specific lectin. This chain is Anti-H(O) lectin 2, found in Ulex europaeus (Furze).